We begin with the raw amino-acid sequence, 174 residues long: ATP synthase subunit b 2 (174 aa).

Residues 27 to 47 (IFWLIITLVAIYLILTKVALP) form a helical membrane-spanning segment.

It belongs to the ATPase B chain family. In terms of assembly, F-type ATPases have 2 components, F(1) - the catalytic core - and F(0) - the membrane proton channel. F(1) has five subunits: alpha(3), beta(3), gamma(1), delta(1), epsilon(1). F(0) has three main subunits: a(1), b(2) and c(10-14). The alpha and beta chains form an alternating ring which encloses part of the gamma chain. F(1) is attached to F(0) by a central stalk formed by the gamma and epsilon chains, while a peripheral stalk is formed by the delta and b chains.

The protein localises to the cell inner membrane. Functionally, f(1)F(0) ATP synthase produces ATP from ADP in the presence of a proton or sodium gradient. F-type ATPases consist of two structural domains, F(1) containing the extramembraneous catalytic core and F(0) containing the membrane proton channel, linked together by a central stalk and a peripheral stalk. During catalysis, ATP synthesis in the catalytic domain of F(1) is coupled via a rotary mechanism of the central stalk subunits to proton translocation. In terms of biological role, component of the F(0) channel, it forms part of the peripheral stalk, linking F(1) to F(0). The b'-subunit is a diverged and duplicated form of b found in plants and photosynthetic bacteria. The sequence is that of ATP synthase subunit b 2 (atpF2) from Dinoroseobacter shibae (strain DSM 16493 / NCIMB 14021 / DFL 12).